The following is a 1209-amino-acid chain: Phospholipid-transporting ATPase ID (1209 aa).

The segment covering 1–12 has biased composition (basic and acidic residues); sequence MTVPKEMPEKWA. Positions 1–36 are disordered; the sequence is MTVPKEMPEKWARAQAPPSWSRKKPSWGTEEERRAR. The Cytoplasmic segment spans residues 1 to 64; it reads MTVPKEMPEK…TSKYNILTFL (64 aa). A helical transmembrane segment spans residues 65–86; the sequence is PVNLFEQFQEVANTYFLFLLIL. Over 87–92 the chain is Exoplasmic loop; that stretch reads QLIPQI. The chain crosses the membrane as a helical span at residues 93-112; that stretch reads SSLSWFTTIVPLVLVLTITA. The Cytoplasmic segment spans residues 113–295; sequence VKDATDDYFR…TSIDRLMNTL (183 aa). Residues 296–317 form a helical membrane-spanning segment; sequence VLWIFGFLVCMGVILAIGNAIW. Over 318-346 the chain is Exoplasmic loop; it reads EHEVGMRFQVYLPWDEAVDSAFFSGFLSF. A helical transmembrane segment spans residues 347 to 368; that stretch reads WSYIIILNTVVPISLYVSVEVI. Residues 369–889 lie on the Cytoplasmic side of the membrane; sequence RLGHSYFINW…GRWSYLRMCK (521 aa). The active-site 4-aspartylphosphate intermediate is the D411. ATP is bound by residues D411, K412, T413, E515, F556, K579, R613, T693, G694, D695, R807, and K813. Mg(2+) is bound at residue D411. Position 413 (T413) interacts with Mg(2+). D833 lines the Mg(2+) pocket. ATP is bound by residues N836 and D837. D837 provides a ligand contact to Mg(2+). The helical transmembrane segment at 890–910 threads the bilayer; the sequence is FLCYFFYKNFAFTMVHFWFGF. The Exoplasmic loop segment spans residues 911–922; the sequence is FCGFSAQTVYDQ. A helical membrane pass occupies residues 923–942; the sequence is YFITLYNIVYTSLPVLAMGV. Topologically, residues 943–972 are cytoplasmic; that stretch reads FDQDVPEQRSMEYPKLYEPGQLNLLFNKRE. A helical transmembrane segment spans residues 973 to 994; that stretch reads FFICIAQGIYTSVLMFFIPYGV. Residues 995–1008 are Exoplasmic loop-facing; sequence FADATRDDGTQLAD. A helical transmembrane segment spans residues 1009–1031; the sequence is YQSFAVTVATSLVIVVSVQIGLD. The Cytoplasmic segment spans residues 1032–1037; it reads TGYWTA. Residues 1038–1058 form a helical membrane-spanning segment; sequence INHFFIWGSLAVYFAILFAMH. At 1059–1078 the chain is on the exoplasmic loop side; it reads SNGLFDMFPNQFRFVGNAQN. A helical membrane pass occupies residues 1079–1103; the sequence is TLAQPTVWLTIVLTTVVCIMPVVAF. Topologically, residues 1104–1209 are cytoplasmic; that stretch reads RFLRLNLKPD…SGGADKPLKG (106 aa). S1175 carries the post-translational modification Phosphoserine. The interval 1181-1209 is disordered; that stretch reads SSSWIESLRRKKSDSASSPSGGADKPLKG. A compositionally biased stretch (low complexity) spans 1195–1209; the sequence is SASSPSGGADKPLKG.

The protein belongs to the cation transport ATPase (P-type) (TC 3.A.3) family. Type IV subfamily. Component of a P4-ATPase flippase complex which consists of a catalytic alpha subunit ATP8B2 and an accessory beta subunit TMEM30A or TMEM30B. It depends on Mg(2+) as a cofactor. As to expression, isoform 3 is ubiquitous, with highest expression in aorta, cerebellum and uterus.

It localises to the cell membrane. It is found in the endoplasmic reticulum membrane. It carries out the reaction ATP + H2O + phospholipidSide 1 = ADP + phosphate + phospholipidSide 2.. The catalysed reaction is a 1,2-diacyl-sn-glycero-3-phosphocholine(out) + ATP + H2O = a 1,2-diacyl-sn-glycero-3-phosphocholine(in) + ADP + phosphate + H(+). Its function is as follows. Catalytic component of P4-ATPase flippase complex, which catalyzes the hydrolysis of ATP coupled to the transport of phosphatidylcholine (PC) from the outer to the inner leaflet of the plasma membrane. May contribute to the maintenance of membrane lipid asymmetry. This Homo sapiens (Human) protein is Phospholipid-transporting ATPase ID.